The chain runs to 1095 residues: Collagen, type I, alpha 1a (1095 aa).

Pro residues predominate over residues 1–21 (SPAMPVPGPMGPMGPRGPPGS). Residues 1–1011 (SPAMPVPGPM…QPQEKAPDPY (1011 aa)) form a disordered region. A compositionally biased stretch (low complexity) spans 22–49 (PGASGPQGFTGPPGEPGEAGSAGAMGPR). The span at 58–72 (NGEDGESGKPGRGGE) shows a compositional bias: basic and acidic residues. A compositionally biased stretch (low complexity) spans 127–145 (TGAAGAAGARGNDGAAGAA). The span at 147 to 160 (PPGPTGPAGPPGFP) shows a compositional bias: pro residues. Residues 161-179 (GGPGAKGDAGAQGGRGPEG) show a composition bias toward gly residues. 3 stretches are compositionally biased toward low complexity: residues 180-223 (PAGA…AGAP), 232-270 (SGPQ…APGV), and 288-297 (EPGAAGARGA). Gly residues predominate over residues 299 to 311 (GERGGPGGRGFPG). Composition is skewed to low complexity over residues 385–400 (VGAR…PGPK), 477–489 (LPGE…PAGA), 498–544 (ERGA…QGMP), and 577–592 (RGLT…AGAT). Over residues 602–611 (GPVGPGGARG) the composition is skewed to gly residues. Composition is skewed to low complexity over residues 625-661 (AGFA…AGPT) and 675-697 (PKGA…AGRV). The span at 699-712 (PPGPSGNPGPPGPA) shows a compositional bias: pro residues. Residues 804-822 (PGLAGAPGEPGREGSPGNE) are compositionally biased toward low complexity. Residues 848-858 (APGPPGAPGPV) are compositionally biased toward pro residues. A compositionally biased stretch (low complexity) spans 872–893 (PAGPAGSAGPAGPRGPAGALGL). The segment covering 894 to 908 (RGDKGESGEAGERGM) has biased composition (basic and acidic residues). The span at 924-960 (AGSSGEQGPAGAAGPAGPRGPAGSAGSPGKDGMSGLP) shows a compositional bias: low complexity. The segment covering 976–988 (AGPPGPPGPPGAP) has biased composition (pro residues). The 34-residue stretch at 1062–1095 (TGTWGKLPLLDLAPMDVGAPDQEFGLEVGPVCFL) folds into the Fibrillar collagen NC1 domain.

Belongs to the fibrillar collagen family.

It is found in the secreted. The protein localises to the extracellular space. Its subcellular location is the extracellular matrix. This Epinephelus caninus (Dogtooth grouper) protein is Collagen, type I, alpha 1a.